The primary structure comprises 356 residues: Sorbitol dehydrogenase (356 aa).

C44 provides a ligand contact to Zn(2+). Y50 lines the substrate pocket. Zn(2+) is bound by residues H69 and E70. E155 contacts substrate. I183, D203, and R208 together coordinate NAD(+). A phosphoserine mark is found at S210 and S224. Residues 272 to 274 (VGL) and 296 to 298 (VFR) contribute to the NAD(+) site. Substrate is bound by residues R298 and Y299.

The protein belongs to the zinc-containing alcohol dehydrogenase family. As to quaternary structure, homotetramer. It depends on Zn(2+) as a cofactor. In terms of tissue distribution, expressed in lens.

Its subcellular location is the mitochondrion membrane. The protein resides in the cell projection. The protein localises to the cilium. It localises to the flagellum. It carries out the reaction xylitol + NAD(+) = D-xylulose + NADH + H(+). It catalyses the reaction keto-D-fructose + NADH + H(+) = D-sorbitol + NAD(+). The enzyme catalyses L-iditol + NAD(+) = keto-L-sorbose + NADH + H(+). Its activity is regulated as follows. Inhibited in vitro by metal chelators such as EDTA and 1,10-phenanthroline. Its function is as follows. Polyol dehydrogenase that catalyzes the reversible NAD(+)-dependent oxidation of various sugar alcohols. Is mostly active with xylitol, D-sorbitol (D-glucitol) and L-iditol as substrates, leading to the C2-oxidized products D-xylulose, D-fructose and L-sorbose, respectively. Is a key enzyme in the polyol pathway that interconverts glucose and fructose via sorbitol, which constitutes an important alternate route for glucose metabolism. May play a role in sperm motility by using sorbitol as an alternative energy source for sperm motility. Cannot use NADP(+) as the electron acceptor. Has no activity on ethanol, methanol, glycerol, galactitol and fructose 6-phosphate. The polypeptide is Sorbitol dehydrogenase (SORD) (Bos taurus (Bovine)).